The primary structure comprises 326 residues: Isopenicillin N synthase (326 aa).

The isopenicillin N site is built by Arg84, Tyr88, and Tyr186. Residues Arg84, Tyr88, Tyr186, His209, and Asp211 each coordinate N-[(5S)-5-amino-5-carboxypentanoyl]-L-cysteinyl-D-valine. The 101-residue stretch at 183–283 (LIRYPFLENY…RLSIPFFANL (101 aa)) folds into the Fe2OG dioxygenase domain. Fe(2+) is bound by residues His209, Asp211, and His265. Arg274 is a binding site for 2-oxoglutarate. An isopenicillin N-binding site is contributed by Ser276. Ser276 provides a ligand contact to N-[(5S)-5-amino-5-carboxypentanoyl]-L-cysteinyl-D-valine.

It belongs to the iron/ascorbate-dependent oxidoreductase family. Fe cation serves as cofactor. L-ascorbate is required as a cofactor.

It carries out the reaction N-[(5S)-5-amino-5-carboxypentanoyl]-L-cysteinyl-D-valine + O2 = isopenicillin N + 2 H2O. It participates in antibiotic biosynthesis; penicillin G biosynthesis; penicillin G from L-alpha-aminoadipate and L-cysteine and L-valine: step 2/3. Removes, in the presence of oxygen, 4 hydrogen atoms from delta-L-(alpha-aminoadipyl)-L-cysteinyl-D-valine (ACV) to form the azetidinone and thiazolidine rings of isopenicillin. In Flavobacterium sp. (strain SC 12,154), this protein is Isopenicillin N synthase (pcbC).